The chain runs to 809 residues: Pentatricopeptide repeat-containing protein At1g11290, chloroplastic (809 aa).

Residues 1 to 46 constitute a chloroplast transit peptide; that stretch reads MSSQLVQFSTVPQIPNPPSRHRHFLSERNYIPANVYEHPAALLLER. PPR repeat units follow at residues 68 to 98, 99 to 133, 134 to 168, 169 to 199, 200 to 234, 235 to 269, 270 to 300, 301 to 335, 336 to 370, 371 to 401, 402 to 436, 437 to 471, 472 to 502, 503 to 537, 538 to 568, and 574 to 604; these read EHFFQTKLVSLFCRYGSVDEAARVFEPIDSK, LNVLYHTMLKGFAKVSDLDKALQFFVRMRYDDVEP, VVYNFTYLLKVCGDEAELRVGKEIHGLLVKSGFSL, DLFAMTGLENMYAKCRQVNEARKVFDRMPER, DLVSWNTIVAGYSQNGMARMALEMVKSMCEENLKP, SFITIVSVLPAVSALRLISVGKEIHGYAMRSGFDS, LVNISTALVDMYAKCGSLETARQLFDGMLER, NVVSWNSMIDAYVQNENPKEAMLIFQKMLDEGVKP, TDVSVMGALHACADLGDLERGRFIHKLSVELGLDR, NVSVVNSLISMYCKCKEVDTAASMFGKLQSR, TLVSWNAMILGFAQNGRPIDALNYFSQMRSRTVKP, DTFTYVSVITAIAELSITHHAKWIHGVVMRSCLDK, NVFVTTALVDMYAKCGAIMIARLIFDMMSER, HVTTWNAMIDGYGTHGFGKAALELFEEMQKGTIKP, NGVTFLSVISACSHSGLVEAGLKCFYMMKEN, and SMDHYGAMVDLLGRAGRLNEAWDFIMQMPVK. A type E motif region spans residues 609 to 684; it reads VYGAMLGACQ…TPGCSMVEIK (76 aa). A type E(+) motif region spans residues 685–715; sequence NEVHSFFSGSTAHPDSKKIYAFLEKLICHIK. The interval 716-809 is type DYW motif; sequence EAGYVPDTNL…NGACSCGDYW (94 aa).

It belongs to the PPR family. PCMP-H subfamily.

Its subcellular location is the plastid. The protein localises to the chloroplast. Its function is as follows. Involved in multiple sites RNA editing events in chloroplasts. Involved in the editing of the site 7 of ndhB (ndhB-7) and site 5 of ndhD (ndhD-5) transcripts, which are two plastid-encoded subunits of the chloroplast NAD(P)H dehydrogenase (NDH) complex. Involved in the editing of the site 3 of rpoB (rpoB-3) transcript. Required for the activity of the NDH complex of the photosynthetic electron transport chain. Possesses low endoribonuclease activity in vitro. The protein is Pentatricopeptide repeat-containing protein At1g11290, chloroplastic (PCMP-H40) of Arabidopsis thaliana (Mouse-ear cress).